The sequence spans 470 residues: MRDYIPKYLNAFLLAFATFAVGFAIFIAKDSNSSSHLYFSTSSSLWTSSFSPAFITVSIFLTVHRFREKRKRNGSNPGSGYWKRDGKVEAELATARVLIREAQLNYSSTTSSPLGDEDYVPHGDIYRNPYAFHRSYLLMEKMFKIYVYEEGDPPIFHYGLCKDIYSMEGLFLNFMENDVLKYRTRDPDKAHVYFLPFSVVMILHHLFDPVVRDKAVLERVIADYVQIISKKYPYWNTSDGFDHFMLSCHDWGHRATWYVKKLFFNSIRVLCNANISEYFNPEKDAPFPEINLLTGDINNLTGGLDPISRTTLAFFAGKSHGKIRPVLLNHWKEKDKDILVYENLPDGLDYTEMMRKSRFCICPSGHEVASPRVPEAIYSGCVPVLISENYVLPFSDVLNWEKFSVSVSVKEIPELKRILMDIPEERYMRLYEGVKKVKRHILVNDPPKRYDVFNMIIHSIWLRRLNVKLL.

Over 1 to 7 (MRDYIPK) the chain is Cytoplasmic. A helical; Signal-anchor transmembrane segment spans residues 8–28 (YLNAFLLAFATFAVGFAIFIA). The Lumenal segment spans residues 29-470 (KDSNSSSHLY…WLRRLNVKLL (442 aa)). Residues N32, N73, N105, N236, N274, and N299 are each glycosylated (N-linked (GlcNAc...) asparagine).

This sequence belongs to the glycosyltransferase 47 family.

Its subcellular location is the golgi apparatus membrane. Its function is as follows. May be involved in cell wall biosynthesis. In Arabidopsis thaliana (Mouse-ear cress), this protein is Probable glycosyltransferase At3g07620.